The sequence spans 285 residues: tRNA pseudouridine synthase B (285 aa).

Aspartate 38 acts as the Nucleophile in catalysis.

Belongs to the pseudouridine synthase TruB family. Type 1 subfamily.

The enzyme catalyses uridine(55) in tRNA = pseudouridine(55) in tRNA. Functionally, responsible for synthesis of pseudouridine from uracil-55 in the psi GC loop of transfer RNAs. In Geobacillus kaustophilus (strain HTA426), this protein is tRNA pseudouridine synthase B.